A 357-amino-acid chain; its full sequence is MSQKQFMQNPWSNWMKGEGPDSDIVISTRLRIARNLRQHPFPLLATDSQAEEVVRKVTEVSDSEAMRKRHQLQVIHMDQINPLEKRVLVEKHLISPHLAEESRKGAVLLREDESVSIMVNEEDHIRIQVLLPGFRLNEAWEIGTKIDDIFEKSLNYAFDETRGYLTSCPTNVGTGIRASVMLHLPALVMTQQISRILQAINQVGLVVRGIYGEGSEALGNLFQLSNQVTLGMSESDILSNLYGVARQIIEQERVARTYLLEHTRVSLEDRIFRSYGILMYARTVESKEAAQRLSDVRLGIDLGIIPNVSPLVLNELLVTTQPGFLQHHAGQKLTPDQRDERRARLIRERLRVVESQE.

In terms of domain architecture, Phosphagen kinase C-terminal spans 24 to 255 (IVISTRLRIA…RQIIEQERVA (232 aa)). Residues 27–31 (STRLR), H92, R126, 177–181 (RASVM), and 208–213 (RGIYGE) contribute to the ATP site. Residues 338 to 343 (RDERRA) carry the RDXXRA motif of the pArg binding pocket involved in allosteric regulation motif.

This sequence belongs to the ATP:guanido phosphotransferase family.

The catalysed reaction is L-arginyl-[protein] + ATP = N(omega)-phospho-L-arginyl-[protein] + ADP + H(+). Its activity is regulated as follows. Appears to be allosterically activated by the binding of pArg-containing polypeptides to the pArg-binding pocket localized in the C-terminal domain of McsB. Functionally, catalyzes the specific phosphorylation of arginine residues in proteins. This chain is Protein-arginine kinase, found in Brevibacillus brevis (strain 47 / JCM 6285 / NBRC 100599).